The chain runs to 64 residues: Large ribosomal subunit protein bL35 (64 aa).

A compositionally biased stretch (basic residues) spans 38–53; the sequence is KRKANLNAPKHVHHTN. The disordered stretch occupies residues 38 to 64; it reads KRKANLNAPKHVHHTNAHSVMSLLCRA.

Belongs to the bacterial ribosomal protein bL35 family.

This chain is Large ribosomal subunit protein bL35, found in Helicobacter pylori (strain G27).